A 563-amino-acid polypeptide reads, in one-letter code: Tripeptidyl-peptidase 1 (563 aa).

Residues 1–19 (MGLQARFLGLLALVIAGKC) form the signal peptide. Residues 20 to 195 (THSPEPDQRW…PEPQGVGPVG (176 aa)) constitute a propeptide, removed in mature form. An intrachain disulfide couples Cys-111 to Cys-122. The Peptidase S53 domain maps to 199–563 (GVTPSVLRQR…PALLKTLLNP (365 aa)). Asn-210 and Asn-222 each carry an N-linked (GlcNAc...) asparagine glycan. Active-site charge relay system residues include Glu-272 and Asp-276. Residues Asn-286, Asn-313, and Asn-443 are each glycosylated (N-linked (GlcNAc...) asparagine). Intrachain disulfides connect Cys-365/Cys-526 and Cys-522/Cys-537. Ser-475 (charge relay system) is an active-site residue. Asp-517 and Val-518 together coordinate Ca(2+). Residues Gly-539, Gly-541, and Asp-543 each contribute to the Ca(2+) site.

Monomer. Interacts with CLN5. Interacts with CLN3. Ca(2+) serves as cofactor. Activated by autocatalytic proteolytical processing upon acidification. N-glycosylation is required for processing and activity.

The protein resides in the lysosome. Its subcellular location is the melanosome. The enzyme catalyses Release of an N-terminal tripeptide from a polypeptide, but also has endopeptidase activity.. In terms of biological role, lysosomal serine protease with tripeptidyl-peptidase I activity. May act as a non-specific lysosomal peptidase which generates tripeptides from the breakdown products produced by lysosomal proteinases. Requires substrates with an unsubstituted N-terminus. The protein is Tripeptidyl-peptidase 1 (Tpp1) of Rattus norvegicus (Rat).